The chain runs to 317 residues: Melanocyte-stimulating hormone receptor (317 aa).

Over 1-37 (MAVQGSQRRLLGSLNSTPTAIPQLGLAANQTGARCLE) the chain is Extracellular. Residue Asn29 is glycosylated (N-linked (GlcNAc...) asparagine). The helical transmembrane segment at 38–63 (VSISDGLFLSLGLVSLVENALVVATI) threads the bilayer. Residues 64–72 (AKNRNLHSP) lie on the Cytoplasmic side of the membrane. The chain crosses the membrane as a helical span at residues 73 to 93 (MYCFICCLALSDLLVSGSNVL). Residues 94 to 118 (ETAVILLLEAGALVARAAVLQQLDN) are Extracellular-facing. The chain crosses the membrane as a helical span at residues 119 to 140 (VIDVITCSSMLSSLCFLGAIAV). At 141-163 (DRYISIFYALRYHSIVTLPRARR) the chain is on the cytoplasmic side. A helical membrane pass occupies residues 164 to 183 (AVAAIWVASVVFSTLFIAYY). Residues 184–191 (DHVAVLLC) are Extracellular-facing. Residues 192–211 (LVVFFLAMLVLMAVLYVHML) traverse the membrane as a helical segment. The Cytoplasmic portion of the chain corresponds to 212–240 (ARACQHAQGIARLHKRQRPVHQGFGLKGA). Residues 241-266 (VTLTILLGIFFLCWGPFFLHLTLIVL) traverse the membrane as a helical segment. The Extracellular portion of the chain corresponds to 267–279 (CPEHPTCGCIFKN). Residues 280 to 300 (FNLFLALIICNAIIDPLIYAF) traverse the membrane as a helical segment. Residues 301–317 (HSQELRRTLKEVLTCSW) lie on the Cytoplasmic side of the membrane. Cys315 is lipidated: S-palmitoyl cysteine.

The protein belongs to the G-protein coupled receptor 1 family. As to quaternary structure, interacts with MGRN1, but does not undergo MGRN1-mediated ubiquitination; this interaction competes with GNAS-binding and thus inhibits agonist-induced cAMP production. Interacts with OPN3; the interaction results in a decrease in MC1R-mediated cAMP signaling and ultimately a decrease in melanin production in melanocytes. As to expression, expressed in melanocytes. Expressed in corticoadrenal tissue.

Its subcellular location is the cell membrane. Receptor for MSH (alpha, beta and gamma) and ACTH. The activity of this receptor is mediated by G proteins which activate adenylate cyclase. Mediates melanogenesis, the production of eumelanin (black/brown) and phaeomelanin (red/yellow), via regulation of cAMP signaling in melanocytes. This Homo sapiens (Human) protein is Melanocyte-stimulating hormone receptor (MC1R).